The primary structure comprises 222 residues: Glutathione-specific gamma-glutamylcyclotransferase 1 (222 aa).

Residues M1 to W25 are disordered. I35 to S40 lines the substrate pocket. Catalysis depends on E115, which acts as the Proton acceptor.

The protein belongs to the gamma-glutamylcyclotransferase family. ChaC subfamily. Interacts with NOTCH1 (via extracellular region).

It localises to the cytoplasm. Its subcellular location is the cytosol. The protein resides in the golgi apparatus. It is found in the trans-Golgi network. It catalyses the reaction glutathione = L-cysteinylglycine + 5-oxo-L-proline. In terms of biological role, catalyzes the cleavage of glutathione into 5-oxo-L-proline and a Cys-Gly dipeptide. Acts specifically on glutathione, but not on other gamma-glutamyl peptides. Glutathione depletion is an important factor for apoptosis initiation and execution. Acts as a pro-apoptotic component of the unfolded protein response pathway by mediating the pro-apoptotic effects of the ATF4-ATF3-DDIT3/CHOP cascade. Negative regulator of Notch signaling pathway involved in embryonic neurogenesis: acts by inhibiting Notch cleavage by furin, maintaining Notch in an immature inactive form, thereby promoting neurogenesis in embryos. The protein is Glutathione-specific gamma-glutamylcyclotransferase 1 of Rattus norvegicus (Rat).